The chain runs to 870 residues: DNA mismatch repair protein MutS (870 aa).

Gly-617 to Ser-624 lines the ATP pocket.

The protein belongs to the DNA mismatch repair MutS family.

This protein is involved in the repair of mismatches in DNA. It is possible that it carries out the mismatch recognition step. This protein has a weak ATPase activity. The polypeptide is DNA mismatch repair protein MutS (Phocaeicola vulgatus (strain ATCC 8482 / DSM 1447 / JCM 5826 / CCUG 4940 / NBRC 14291 / NCTC 11154) (Bacteroides vulgatus)).